A 259-amino-acid chain; its full sequence is Type-2Aa cytolytic delta-endotoxin (259 aa).

Belongs to the cyt1/cyt2 endotoxin family. In terms of assembly, homodimer (protoxin) and monomer (active toxin). Post-translationally, active after proteolytic processing.

Functionally, kills the larvae of dipteran insects by making pores in the epithelial cell membrane of the insect midgut. This Bacillus thuringiensis subsp. kyushuensis protein is Type-2Aa cytolytic delta-endotoxin (cyt2Aa1).